The following is a 265-amino-acid chain: 5'-nucleotidase SurE (265 aa).

A divalent metal cation is bound by residues D8, D9, S40, and N98.

The protein belongs to the SurE nucleotidase family. A divalent metal cation serves as cofactor.

Its subcellular location is the cytoplasm. The catalysed reaction is a ribonucleoside 5'-phosphate + H2O = a ribonucleoside + phosphate. In terms of biological role, nucleotidase that shows phosphatase activity on nucleoside 5'-monophosphates. In Trichormus variabilis (strain ATCC 29413 / PCC 7937) (Anabaena variabilis), this protein is 5'-nucleotidase SurE.